The primary structure comprises 145 residues: 3-hydroxyacyl-[acyl-carrier-protein] dehydratase FabZ (145 aa).

Residue H49 is part of the active site.

The protein belongs to the thioester dehydratase family. FabZ subfamily.

The protein localises to the cytoplasm. It carries out the reaction a (3R)-hydroxyacyl-[ACP] = a (2E)-enoyl-[ACP] + H2O. Functionally, involved in unsaturated fatty acids biosynthesis. Catalyzes the dehydration of short chain beta-hydroxyacyl-ACPs and long chain saturated and unsaturated beta-hydroxyacyl-ACPs. The sequence is that of 3-hydroxyacyl-[acyl-carrier-protein] dehydratase FabZ from Rickettsia conorii (strain ATCC VR-613 / Malish 7).